The chain runs to 226 residues: Putative ABC transporter ATP-binding protein BQ02700 (226 aa).

Residues 4 to 225 (IKFDKVTQVF…VAIKEYIRRM (222 aa)) form the ABC transporter domain. 35–42 (GANGSGKS) lines the ATP pocket.

The protein belongs to the ABC transporter superfamily.

It is found in the cell inner membrane. Functionally, probably part of an ABC transporter complex. Responsible for energy coupling to the transport system. The polypeptide is Putative ABC transporter ATP-binding protein BQ02700 (Bartonella quintana (strain Toulouse) (Rochalimaea quintana)).